Reading from the N-terminus, the 74-residue chain is Protein DELETION OF SUV3 SUPPRESSOR 1(I) (74 aa).

The disordered stretch occupies residues 35–74 (EKEEVKEVSQQWEDDWDDDDVNDDFSRQLRKELENGTDKK). Positions 46–57 (WEDDWDDDDVND) are enriched in acidic residues. The span at 58-74 (DFSRQLRKELENGTDKK) shows a compositional bias: basic and acidic residues.

It belongs to the DSS1/SEM1 family. In terms of assembly, part of the 26S proteasome. Interacts with BRCA2A and BRCA2B. Interacts with UCH1 and UCH2. Can form a tripartite complex with both RAD51 and BRCA2B or both DMC1 and BRCA2B.

Its function is as follows. Subunit of the 26S proteasome which plays a role in ubiquitin-dependent proteolysis. In Arabidopsis thaliana (Mouse-ear cress), this protein is Protein DELETION OF SUV3 SUPPRESSOR 1(I).